Consider the following 154-residue polypeptide: Transcription antitermination protein NusB (154 aa).

The protein belongs to the NusB family.

Involved in transcription antitermination. Required for transcription of ribosomal RNA (rRNA) genes. Binds specifically to the boxA antiterminator sequence of the ribosomal RNA (rrn) operons. The sequence is that of Transcription antitermination protein NusB from Desulfosudis oleivorans (strain DSM 6200 / JCM 39069 / Hxd3) (Desulfococcus oleovorans).